We begin with the raw amino-acid sequence, 436 residues long: F-box/LRR-repeat protein At2g40920 (436 aa).

Residues 48-98 form the F-box domain; the sequence is EYLLQNFDLDHVMEILMRFPLTSLTRFKCVSKQWSSLISSRYFCNLLYTTV. 2 LRR repeats span residues 276-301 and 393-416; these read NCVV…IHLD and YYNL…WFDK.

This Arabidopsis thaliana (Mouse-ear cress) protein is F-box/LRR-repeat protein At2g40920.